The sequence spans 270 residues: uncharacterized protein (270 aa).

Residues 1 to 22 form the signal peptide; the sequence is MGYIKRMALYMSVFLLIIFIVG. The N-palmitoyl cysteine moiety is linked to residue cysteine 23. Cysteine 23 carries the S-diacylglycerol cysteine lipid modification.

It belongs to the staphylococcal tandem lipoprotein family.

It localises to the cell membrane. This is an uncharacterized protein from Staphylococcus aureus (strain COL).